The sequence spans 364 residues: DNA replication and repair protein RecF (364 aa).

An ATP-binding site is contributed by 30–37; sequence GANGSGKT.

It belongs to the RecF family.

The protein localises to the cytoplasm. The RecF protein is involved in DNA metabolism; it is required for DNA replication and normal SOS inducibility. RecF binds preferentially to single-stranded, linear DNA. It also seems to bind ATP. The chain is DNA replication and repair protein RecF from Sodalis glossinidius (strain morsitans).